Consider the following 89-residue polypeptide: MSITVEEKARLIKEYATKEGDTGSPEVQVAILSSRIATLTEHFKSHKKDNHSRRGLLMMVAQRRKLLDYLKKKEEARYTALIARLGLRR.

The protein belongs to the universal ribosomal protein uS15 family. Part of the 30S ribosomal subunit. Forms a bridge to the 50S subunit in the 70S ribosome, contacting the 23S rRNA.

Functionally, one of the primary rRNA binding proteins, it binds directly to 16S rRNA where it helps nucleate assembly of the platform of the 30S subunit by binding and bridging several RNA helices of the 16S rRNA. Forms an intersubunit bridge (bridge B4) with the 23S rRNA of the 50S subunit in the ribosome. In Cereibacter sphaeroides (strain ATCC 17025 / ATH 2.4.3) (Rhodobacter sphaeroides), this protein is Small ribosomal subunit protein uS15.